A 600-amino-acid polypeptide reads, in one-letter code: Aspartate--tRNA(Asp/Asn) ligase (600 aa).

L-aspartate is bound at residue glutamate 174. An aspartate region spans residues 198-201; the sequence is QLFK. Arginine 220 is a binding site for L-aspartate. ATP contacts are provided by residues 220–222 and glutamine 229; that span reads RDE. Histidine 457 provides a ligand contact to L-aspartate. Glutamate 491 is a binding site for ATP. Arginine 498 contacts L-aspartate. Position 543 to 546 (543 to 546) interacts with ATP; it reads GLDR.

The protein belongs to the class-II aminoacyl-tRNA synthetase family. Type 1 subfamily. As to quaternary structure, homodimer.

The protein resides in the cytoplasm. The enzyme catalyses tRNA(Asx) + L-aspartate + ATP = L-aspartyl-tRNA(Asx) + AMP + diphosphate. Its function is as follows. Aspartyl-tRNA synthetase with relaxed tRNA specificity since it is able to aspartylate not only its cognate tRNA(Asp) but also tRNA(Asn). Reaction proceeds in two steps: L-aspartate is first activated by ATP to form Asp-AMP and then transferred to the acceptor end of tRNA(Asp/Asn). The polypeptide is Aspartate--tRNA(Asp/Asn) ligase (Burkholderia mallei (strain NCTC 10247)).